The chain runs to 669 residues: Dymeclin (669 aa).

G2 carries the N-myristoyl glycine lipid modification.

The protein belongs to the dymeclin family. Interacts with GOLM1 and PPIB. In terms of processing, myristoylated in vitro; myristoylation is not essential for protein targeting to Golgi compartment. As to expression, expressed in most embryo-fetal and adult tissues. Abundant in primary chondrocytes, osteoblasts, cerebellum, kidney, lung, stomach, heart, pancreas and fetal brain. Very low or no expression in the spleen, thymus, esophagus, bladder and thyroid gland.

It localises to the cytoplasm. The protein resides in the golgi apparatus. The protein localises to the membrane. Functionally, necessary for correct organization of Golgi apparatus. Involved in bone development. This chain is Dymeclin (DYM), found in Homo sapiens (Human).